The chain runs to 22 residues: Cytin chain B (22 aa).

The protein belongs to the protease inhibitor I13 (potato type I serine protease inhibitor) family. Heterodimer of an A chain and a B chain, linked by a disulfide bond.

Functionally, inhibitor of chymotrypsin. The chain is Cytin chain B from Theromyzon tessulatum (Duck leech).